Consider the following 733-residue polypeptide: Lanosterol synthase (733 aa).

An N-acetylthreonine modification is found at threonine 2. A PFTB 1 repeat occupies arginine 125 to glycine 166. Aspartate 456 functions as the Proton donor in the catalytic mechanism. PFTB repeat units lie at residues leucine 484–tyrosine 529, leucine 561–glycine 601, and valine 613–cysteine 654.

It belongs to the terpene cyclase/mutase family. Monomer.

It is found in the endoplasmic reticulum membrane. It catalyses the reaction (S)-2,3-epoxysqualene = lanosterol. The protein operates within terpene metabolism; lanosterol biosynthesis; lanosterol from farnesyl diphosphate: step 3/3. In terms of biological role, key enzyme in the cholesterol biosynthesis pathway. Catalyzes the cyclization of (S)-2,3 oxidosqualene to lanosterol, a reaction that forms the sterol nucleus. Through the production of lanosterol may regulate lens protein aggregation and increase transparency. The chain is Lanosterol synthase from Mus musculus (Mouse).